Here is a 400-residue protein sequence, read N- to C-terminus: Mu-type opioid receptor (400 aa).

Topologically, residues 1–68 (MDSSAVPANA…CPPTGSPSMI (68 aa)) are extracellular. N-linked (GlcNAc...) asparagine glycans are attached at residues Asn9, Asn12, Asn33, Asn40, and Asn48. The helical transmembrane segment at 69-93 (TAITIMALYSIVCVVGLFGNFLVMY) threads the bilayer. Residues 94–106 (VIVRYTKMKTATN) are Cytoplasmic-facing. Residues 107–131 (IYIFNLALADALATSTLPFQSVNYL) traverse the membrane as a helical segment. At 132–142 (MGTWPFGTILC) the chain is on the extracellular side. Cys142 and Cys219 are joined by a disulfide. A helical transmembrane segment spans residues 143–165 (KIVISIDYYNMFTSIFTLCTMSV). Over 166-185 (DRYIAVCHPVKALDFRTPRN) the chain is Cytoplasmic. A Phosphotyrosine modification is found at Tyr168. The helical transmembrane segment at 186–207 (AKIVNVCNWIISSAIGLPVMFM) threads the bilayer. At 208–230 (ATTKYRQGSIDCTLTFSHPTWYW) the chain is on the extracellular side. The helical transmembrane segment at 231-255 (ENLLKICVFIFAFIMPVLIITVCYG) threads the bilayer. At 256-279 (LMILRLKSVRMLSGSKEKDRNLRR) the chain is on the cytoplasmic side. A helical membrane pass occupies residues 280–306 (ITRMVLVVVAVFIVCWTPIHIYVIIKA). Topologically, residues 307–314 (LVTIPETT) are extracellular. Residues 315-338 (FQTVSWHFCIALGYTNSCLNPVLY) traverse the membrane as a helical segment. The short motif at 334–338 (NPVLY) is the NPxxY; plays a role in stabilizing the activated conformation of the receptor element. Over 339 to 400 (AFLDENFKRC…NLEAETAPLP (62 aa)) the chain is Cytoplasmic. The S-palmitoyl cysteine moiety is linked to residue Cys353. Ser365 is subject to Phosphoserine. Position 372 is a phosphothreonine (Thr372). Ser377 is modified (phosphoserine). A Phosphothreonine modification is found at Thr396.

Belongs to the G-protein coupled receptor 1 family. Forms homooligomers and heterooligomers with other GPCRs, such as OPRD1, OPRK1, OPRL1, NPFFR2, ADRA2A, SSTR2, CNR1 and CCR5 (probably in dimeric forms). Interacts with heterotrimeric G proteins; interaction with a heterotrimeric complex containing GNAI1, GNB1 and GNG2 stabilizes the active conformation of the receptor and increases its affinity for endomorphin-2, the synthetic opioid peptide DAMGO and for morphinan agonists. Interacts with PPL; the interaction disrupts agonist-mediated G-protein activation. Interacts (via C-terminus) with DNAJB4 (via C-terminus). Interacts with calmodulin; the interaction inhibits the constitutive activity of OPRM1; it abolishes basal and attenuates agonist-stimulated G-protein coupling. Interacts with FLNA, PLD2, RANBP9 and WLS and GPM6A. Interacts with RTP4. Interacts with SYP and GNAS. Interacts with RGS9, RGS17, RGS20, RGS4, PPP1R9B and HINT1. Post-translationally, phosphorylated. Differentially phosphorylated in basal and agonist-induced conditions. Agonist-mediated phosphorylation modulates receptor internalization. Phosphorylated by GRK2 in a agonist-dependent manner. Phosphorylation at Tyr-168 requires receptor activation, is dependent on non-receptor protein tyrosine kinase Src and results in a decrease in agonist efficacy by reducing G-protein coupling efficiency. Phosphorylated on tyrosine residues; the phosphorylation is involved in agonist-induced G-protein-independent receptor down-regulation. Phosphorylation at Ser-377 is involved in G-protein-dependent but not beta-arrestin-dependent activation of the ERK pathway. Ubiquitinated. A basal ubiquitination seems not to be related to degradation. Ubiquitination is increased upon formation of OPRM1:OPRD1 oligomers leading to proteasomal degradation; the ubiquitination is diminished by RTP4.

It is found in the cell membrane. Its subcellular location is the cell projection. The protein localises to the axon. It localises to the perikaryon. The protein resides in the dendrite. It is found in the endosome. In terms of biological role, receptor for endogenous opioids such as beta-endorphin and endomorphin. Receptor for natural and synthetic opioids including morphine, heroin, DAMGO, fentanyl, etorphine, buprenorphin and methadone. Also activated by enkephalin peptides, such as Met-enkephalin or Met-enkephalin-Arg-Phe, with higher affinity for Met-enkephalin-Arg-Phe. Agonist binding to the receptor induces coupling to an inactive GDP-bound heterotrimeric G-protein complex and subsequent exchange of GDP for GTP in the G-protein alpha subunit leading to dissociation of the G-protein complex with the free GTP-bound G-protein alpha and the G-protein beta-gamma dimer activating downstream cellular effectors. The agonist- and cell type-specific activity is predominantly coupled to pertussis toxin-sensitive G(i) and G(o) G alpha proteins, GNAI1, GNAI2, GNAI3 and GNAO1, and to a lesser extent to pertussis toxin-insensitive G alpha proteins GNAZ and GNA15. They mediate an array of downstream cellular responses, including inhibition of adenylate cyclase activity and both N-type and L-type calcium channels, activation of inward rectifying potassium channels, mitogen-activated protein kinase (MAPK), phospholipase C (PLC), phosphoinositide/protein kinase (PKC), phosphoinositide 3-kinase (PI3K) and regulation of NF-kappa-B. Also couples to adenylate cyclase stimulatory G alpha proteins. The selective temporal coupling to G-proteins and subsequent signaling can be regulated by RGSZ proteins, such as RGS9, RGS17 and RGS4. Phosphorylation by members of the GPRK subfamily of Ser/Thr protein kinases and association with beta-arrestins is involved in short-term receptor desensitization. Beta-arrestins associate with the GPRK-phosphorylated receptor and uncouple it from the G-protein thus terminating signal transduction. The phosphorylated receptor is internalized through endocytosis via clathrin-coated pits which involves beta-arrestins. The activation of the ERK pathway occurs either in a G-protein-dependent or a beta-arrestin-dependent manner and is regulated by agonist-specific receptor phosphorylation. Acts as a class A G-protein coupled receptor (GPCR) which dissociates from beta-arrestin at or near the plasma membrane and undergoes rapid recycling. Receptor down-regulation pathways are varying with the agonist and occur dependent or independent of G-protein coupling. Endogenous ligands induce rapid desensitization, endocytosis and recycling. Heterooligomerization with other GPCRs can modulate agonist binding, signaling and trafficking properties. Involved in neurogenesis. This chain is Mu-type opioid receptor (OPRM1), found in Saimiri boliviensis boliviensis (Bolivian squirrel monkey).